The sequence spans 278 residues: Putative transposase for insertion sequence element IS986/IS6110 (278 aa).

The region spanning 101–268 (GPPAPNRLWV…VPPVELEAAY (168 aa)) is the Integrase catalytic domain.

Involved in the transposition of the insertion sequence. The chain is Putative transposase for insertion sequence element IS986/IS6110 from Mycobacterium bovis (strain ATCC BAA-935 / AF2122/97).